The sequence spans 86 residues: Sulmotoxin 2 (86 aa).

A signal peptide spans 1–21 (MKTLLLALAVVAFMCLDSVYP). 5 disulfide bridges follow: Cys24-Cys47, Cys27-Cys35, Cys41-Cys62, Cys66-Cys77, and Cys78-Cys83.

Belongs to the three-finger toxin family. Ancestral subfamily. Boigatoxin sub-subfamily. Monomer. In terms of tissue distribution, expressed by the venom gland.

The protein localises to the secreted. Functionally, probable neurotoxin. Is not toxic to mice and geckos. This chain is Sulmotoxin 2, found in Spilotes sulphureus (Amazon puffing snake).